The chain runs to 156 residues: Transcriptional repressor NrdR (156 aa).

A zinc finger spans residues 3–34; it reads CPKCNSTHSRVVDSRHADEVNAIRRRRECEEC. Positions 49–139 constitute an ATP-cone domain; it reads LIVVKKDGTR…VYKEFKDVDQ (91 aa).

This sequence belongs to the NrdR family. Zn(2+) serves as cofactor.

Functionally, negatively regulates transcription of bacterial ribonucleotide reductase nrd genes and operons by binding to NrdR-boxes. The protein is Transcriptional repressor NrdR of Staphylococcus saprophyticus subsp. saprophyticus (strain ATCC 15305 / DSM 20229 / NCIMB 8711 / NCTC 7292 / S-41).